A 433-amino-acid polypeptide reads, in one-letter code: Xylose isomerase (433 aa).

Active-site residues include H99 and D102. Mg(2+) contacts are provided by E230, E266, H269, D294, D305, D307, and D337.

Belongs to the xylose isomerase family. As to quaternary structure, homotetramer. It depends on Mg(2+) as a cofactor.

It is found in the cytoplasm. The enzyme catalyses alpha-D-xylose = alpha-D-xylulofuranose. The sequence is that of Xylose isomerase from Cereibacter sphaeroides (strain ATCC 17023 / DSM 158 / JCM 6121 / CCUG 31486 / LMG 2827 / NBRC 12203 / NCIMB 8253 / ATH 2.4.1.) (Rhodobacter sphaeroides).